A 465-amino-acid polypeptide reads, in one-letter code: Protein unc-93 homolog A (465 aa).

Helical transmembrane passes span 8-28, 40-60, 71-91, 96-118, and 140-160; these read VLVVSFGFLLLFTAYGGLQSL, VISLSVIYAAIILSSMFLPPI, IVVSMGCYVAYSFGNLAPGWA, TSAILGMGGSPLWSAKCTYLTIS, and IFFFIFQSSGVWGNLMSSLIF. N-linked (GlcNAc...) asparagine glycosylation is found at asparagine 183 and asparagine 189. A helical transmembrane segment spans residues 200–220; that stretch reads TLLGCYIGVGLLAIIFVAVFL. The N-linked (GlcNAc...) asparagine glycan is linked to asparagine 237. 5 helical membrane-spanning segments follow: residues 256–276, 281–301, 319–339, 343–363, and 410–427; these read LLLLIPLTMYSGFEQSFLSGE, YVTCALGIHNVGFVMICFAAS, IALFCLAAAINLGSFLGLLYW, PDQLAIFFVFPALWGMADAVW, and IYIALAVLALTMVTYLYV.

It belongs to the unc-93 family.

The protein localises to the membrane. In Danio rerio (Zebrafish), this protein is Protein unc-93 homolog A (unc93a).